A 418-amino-acid polypeptide reads, in one-letter code: UDP-N-acetylglucosamine 1-carboxyvinyltransferase 1 (418 aa).

Residue 22 to 23 (KN) participates in phosphoenolpyruvate binding. Arg94 is a binding site for UDP-N-acetyl-alpha-D-glucosamine. Cys118 functions as the Proton donor in the catalytic mechanism. The residue at position 118 (Cys118) is a 2-(S-cysteinyl)pyruvic acid O-phosphothioketal. UDP-N-acetyl-alpha-D-glucosamine-binding positions include 123–127 (RPIDL), Asp306, and Ile328.

It belongs to the EPSP synthase family. MurA subfamily.

It is found in the cytoplasm. It catalyses the reaction phosphoenolpyruvate + UDP-N-acetyl-alpha-D-glucosamine = UDP-N-acetyl-3-O-(1-carboxyvinyl)-alpha-D-glucosamine + phosphate. Its pathway is cell wall biogenesis; peptidoglycan biosynthesis. In terms of biological role, cell wall formation. Adds enolpyruvyl to UDP-N-acetylglucosamine. The protein is UDP-N-acetylglucosamine 1-carboxyvinyltransferase 1 of Clostridium acetobutylicum (strain ATCC 824 / DSM 792 / JCM 1419 / IAM 19013 / LMG 5710 / NBRC 13948 / NRRL B-527 / VKM B-1787 / 2291 / W).